Reading from the N-terminus, the 352-residue chain is DNA polymerase IV (352 aa).

One can recognise a UmuC domain in the interval 4–185 (IIHVDMDCFF…LPLSKIPGVG (182 aa)). Residues D8 and D103 each contribute to the Mg(2+) site. Residue E104 is part of the active site.

This sequence belongs to the DNA polymerase type-Y family. In terms of assembly, monomer. The cofactor is Mg(2+).

The protein resides in the cytoplasm. It catalyses the reaction DNA(n) + a 2'-deoxyribonucleoside 5'-triphosphate = DNA(n+1) + diphosphate. In terms of biological role, poorly processive, error-prone DNA polymerase involved in untargeted mutagenesis. Copies undamaged DNA at stalled replication forks, which arise in vivo from mismatched or misaligned primer ends. These misaligned primers can be extended by PolIV. Exhibits no 3'-5' exonuclease (proofreading) activity. May be involved in translesional synthesis, in conjunction with the beta clamp from PolIII. This chain is DNA polymerase IV, found in Yersinia pseudotuberculosis serotype O:1b (strain IP 31758).